A 126-amino-acid chain; its full sequence is Small ribosomal subunit protein uS13 (126 aa).

The disordered stretch occupies residues 95–126 (NLPVHGQRTHTNARTRKGPRRAIAGKKKAGKK).

The protein belongs to the universal ribosomal protein uS13 family. Part of the 30S ribosomal subunit. Forms a loose heterodimer with protein S19. Forms two bridges to the 50S subunit in the 70S ribosome.

Functionally, located at the top of the head of the 30S subunit, it contacts several helices of the 16S rRNA. In the 70S ribosome it contacts the 23S rRNA (bridge B1a) and protein L5 of the 50S subunit (bridge B1b), connecting the 2 subunits; these bridges are implicated in subunit movement. Contacts the tRNAs in the A and P-sites. In Frankia casuarinae (strain DSM 45818 / CECT 9043 / HFP020203 / CcI3), this protein is Small ribosomal subunit protein uS13.